The sequence spans 92 residues: Small ribosomal subunit protein uS19c (92 aa).

This sequence belongs to the universal ribosomal protein uS19 family.

It is found in the plastid. Its function is as follows. Protein S19 forms a complex with S13 that binds strongly to the 16S ribosomal RNA. This Cuscuta gronovii (Common dodder) protein is Small ribosomal subunit protein uS19c.